The sequence spans 105 residues: Cyclotide vibi-E (105 aa).

The N-terminal stretch at 1–9 (AAFALPALA) is a signal peptide. Positions 10–69 (SSFEKDVISFRAIQAVLEKRGLSKLEDDPVLSALAHTKTIISNPVIEEALLNGANLKAGN) are excised as a propeptide. The segment at residues 70–99 (GIPCAESCVWIPCTVTALIGCGCSNKVCYN) is a cross-link (cyclopeptide (Gly-Asn)). 3 disulfide bridges follow: cysteine 73–cysteine 90, cysteine 77–cysteine 92, and cysteine 82–cysteine 97. The propeptide occupies 100–105 (SLQTKY).

This is a cyclic peptide.

Its function is as follows. Probably participates in a plant defense mechanism. Has cytotoxic activity, active against a human lymphoma cell line with an IC(50) of 3.2 uM. This is Cyclotide vibi-E from Viola biflora (Yellow wood violet).